A 377-amino-acid chain; its full sequence is 2-aminoethylphosphonate--pyruvate transaminase (377 aa).

K194 is subject to N6-(pyridoxal phosphate)lysine.

It belongs to the class-V pyridoxal-phosphate-dependent aminotransferase family. PhnW subfamily. Homodimer. Pyridoxal 5'-phosphate is required as a cofactor.

It catalyses the reaction (2-aminoethyl)phosphonate + pyruvate = phosphonoacetaldehyde + L-alanine. In terms of biological role, involved in phosphonate degradation. In Cupriavidus necator (strain ATCC 17699 / DSM 428 / KCTC 22496 / NCIMB 10442 / H16 / Stanier 337) (Ralstonia eutropha), this protein is 2-aminoethylphosphonate--pyruvate transaminase.